The primary structure comprises 744 residues: Tripartite motif-containing protein 3 (744 aa).

A2 is subject to N-acetylalanine. The segment at 2 to 290 (AKREDSPGPE…LAAQAFPERP (289 aa)) is interaction with KIF21B. S7 carries the phosphoserine modification. An RING-type zinc finger spans residues 22-63 (CSICLDRYRCPKVLPCLHTFCERCLQNYIPPQSLTLSCPVCR). The B box-type zinc-finger motif lies at 110-151 (GRPLSCPNHEGKTMEFYCEACETAMCGECRAGEHREHGTVLL). Positions 115, 118, 138, and 143 each coordinate Zn(2+). Positions 153 to 224 (DVVEQHKAAL…RKQALVSDLE (72 aa)) form a coiled coil. The Filamin repeat unit spans residues 317–418 (TTSATAHETV…VRGSPFRVRA (102 aa)). The interval 419–464 (LRPGDLPPSPDDVKRRVKSPGGPGSHVRQKAVRRPSSMYSTGGKRK) is disordered. At S427 the chain carries Phosphoserine. 6 NHL repeats span residues 473-516 (VFRV…FSNE), 520-563 (KFRF…FSPE), 564-605 (GKFK…FQPN), 609-652 (VGRF…YSAD), 656-699 (LFKF…FDSS), and 700-743 (GSFL…YRYL).

The protein belongs to the TRIM/RBCC family. Forms homooligomers. Interacts with TRIM2; this interaction reduces TRIM2 activity. Associates with myosin-Vb (MYO5B) and alpha-actinin-4 (ACTN4). Component of the CART complex, at least composed of ACTN4, HGS/HRS, MYO5B and TRIM3. Interacts with ZFYVE28/LST2. Interacts with KIF21B.

It is found in the cytoplasm. It localises to the early endosome. The protein resides in the golgi apparatus. The protein localises to the trans-Golgi network. Its subcellular location is the cell projection. It is found in the dendrite. It carries out the reaction S-ubiquitinyl-[E2 ubiquitin-conjugating enzyme]-L-cysteine + [acceptor protein]-L-lysine = [E2 ubiquitin-conjugating enzyme]-L-cysteine + N(6)-ubiquitinyl-[acceptor protein]-L-lysine.. Functionally, E3 ubiquitin ligase that plays essential roles in neuronal functions such as regulation of neuronal plasticity, learning, and memory. In addition to its neuronal functions, participates in other biological processes such as innate immunity or cell cycle regulation. Component of the cytoskeleton-associated recycling or transport complex in neurons, polyubiquitinates gamma-actin, thus regulating neuronal plasticity, learning, and memory. Ubiquitinates postsynaptic scaffold GKAP, a neuronal substrate involved in synaptic remodeling and thereby modulates dendritic spine morphology. Positively regulates motility of microtubule-dependent motor protein KIF21B. Induces growth arrest via its RING-dependent E3 ligase activity and ubiquinates CDKN1A. Positively regulates TLR3-mediated signaling by mediating 'Lys-63'-linked polyubiquitination of TLR3. In turn, promotes the recognition and sorting of polyubiquitinated TLR3 by the ESCRT complexes. The sequence is that of Tripartite motif-containing protein 3 (Trim3) from Mus musculus (Mouse).